We begin with the raw amino-acid sequence, 197 residues long: Putative glutathione-dependent formaldehyde-activating enzyme (197 aa).

The CENP-V/GFA domain maps to 22–171; that stretch reads FPGGKLYCHC…LKSLGLENYD (150 aa). Zn(2+)-binding residues include cysteine 29, cysteine 31, cysteine 50, cysteine 52, cysteine 55, cysteine 97, and cysteine 100.

The protein belongs to the Gfa family. Zn(2+) serves as cofactor.

The enzyme catalyses S-(hydroxymethyl)glutathione = glutathione + formaldehyde. It participates in one-carbon metabolism; formaldehyde degradation; formate from formaldehyde (glutathione route): step 1/3. Functionally, catalyzes the condensation of formaldehyde and glutathione to S-hydroxymethylglutathione. The polypeptide is Putative glutathione-dependent formaldehyde-activating enzyme (Emericella nidulans (strain FGSC A4 / ATCC 38163 / CBS 112.46 / NRRL 194 / M139) (Aspergillus nidulans)).